A 411-amino-acid chain; its full sequence is Na(+)-translocating NADH-quinone reductase subunit F (411 aa).

The helical transmembrane segment at 6–26 (AIGGVAMFTLIIMGLVAIILA) threads the bilayer. Residues 35–129 (GDVTIHINDN…DMKIEIDPEF (95 aa)) form the 2Fe-2S ferredoxin-type domain. Residues cysteine 72, cysteine 78, cysteine 81, and cysteine 113 each contribute to the [2Fe-2S] cluster site. The FAD-binding FR-type domain occupies 132 to 273 (VQKWECEVIS…SGPYGEFFAK (142 aa)).

It belongs to the NqrF family. As to quaternary structure, composed of six subunits; NqrA, NqrB, NqrC, NqrD, NqrE and NqrF. It depends on [2Fe-2S] cluster as a cofactor. FAD is required as a cofactor.

The protein localises to the cell inner membrane. The catalysed reaction is a ubiquinone + n Na(+)(in) + NADH + H(+) = a ubiquinol + n Na(+)(out) + NAD(+). Its function is as follows. NQR complex catalyzes the reduction of ubiquinone-1 to ubiquinol by two successive reactions, coupled with the transport of Na(+) ions from the cytoplasm to the periplasm. The first step is catalyzed by NqrF, which accepts electrons from NADH and reduces ubiquinone-1 to ubisemiquinone by a one-electron transfer pathway. The protein is Na(+)-translocating NADH-quinone reductase subunit F of Psychrobacter cryohalolentis (strain ATCC BAA-1226 / DSM 17306 / VKM B-2378 / K5).